The following is a 153-amino-acid chain: Superoxide dismutase [Cu-Zn] (153 aa).

Cu cation contacts are provided by histidine 45, histidine 47, and histidine 62. A disulfide bridge connects residues cysteine 56 and cysteine 145. Zn(2+) is bound by residues histidine 62, histidine 70, histidine 79, and aspartate 82. Cu cation is bound at residue histidine 119.

This sequence belongs to the Cu-Zn superoxide dismutase family. In terms of assembly, homodimer. Requires Cu cation as cofactor. Zn(2+) serves as cofactor.

The protein resides in the cytoplasm. It catalyses the reaction 2 superoxide + 2 H(+) = H2O2 + O2. Destroys radicals which are normally produced within the cells and which are toxic to biological systems. The protein is Superoxide dismutase [Cu-Zn] of Drosophila yakuba (Fruit fly).